A 378-amino-acid chain; its full sequence is MGTRLEATEQSNHRTQRNDIQLENAKAAGKMGISVDLEAKYAKLGLNLGAITFGEKDRKKMKNSHLRKQENANISLAVCALLNSGGGAIKVKIENENYSLTRDGLGLDLEASLCKCLPFVQWHLDFTESEGYIYIYVKSWSQEIFGLPIGTLRTNLYVRSMSSSVQVSAAAALEFLQDLEETGGRPCVRPELPASIAFPEVEGEWHLEDLAAALFNRTEFQYEETFPFTRSRYVEVTLLSAKRLRKRIKELLPQTVSAFANTDGGFLFIGLDGKTQQIIGFEAEKSDLVLLESEIEKHIRQLPVTHFCEEKEKIKYTCKFIEVHKSGAVCAYVCALRVERFCCAVFAAEPESWHVEGGCVKRFTTEEWVKLQMNAPSG.

It belongs to the Schlafen family. Mainly expressed in the thymus, lymph node and spleen.

Its subcellular location is the cytoplasm. In terms of biological role, tRNA-binding protein involved in T-cell mediated immunity. Plays a key role during the metabolic reprograming phase of activated T-cell, when T-cells produce reactive oxygen species (ROS): acts by binding tRNAs and protecting them from cleavage by the oxidative stress-activated ribonuclease angiogenin (ANG). Also required for T-cell quiescence maintenance. The polypeptide is Schlafen family member 2 (Mus musculus (Mouse)).